The primary structure comprises 69 residues: Conopeptide Y-Pl1 (69 aa).

An N-terminal signal peptide occupies residues 1–20 (MSKLGVVLFVFLLLLPLAAP). A propeptide spanning residues 21 to 69 (QPVGDQPADQPADRNAEARARFLHPFQYYTLYRYLTRFLHRYPIYYIRY) is cleaved from the precursor.

The protein belongs to the conotoxin M superfamily. Conopeptide Y family. In terms of tissue distribution, expressed by the venom duct.

The protein resides in the secreted. Functionally, tyrosine-rich conopeptide that targets several channels/receptors that are expressed in Xenopus oocytes. These targets are the voltage-gated potassium channels Kv1.6/KCNA6 (IC(50) is 170 nM) and Kv1.2/KCNA2 (IC(50) is 2.0 uM), Nav1.2/SCN2A (30% of inhibition), and N-methyl-D-aspartate (NMDA) receptor (GRIN1/GRIN2A/GRIN3B and GRIN1/GRIN2B/GRIN3B) (15% of inhibition). In vivo, causes the marine worm N.virens to move very slowly in contrast to control worms, and causes seizures (at 5 nmol) and death (20 nmol) to mice when intracranially injected. In Conus planorbis (Planorbis cone), this protein is Conopeptide Y-Pl1.